The chain runs to 660 residues: DNA mismatch repair protein MutL (660 aa).

A disordered region spans residues 414 to 433 (SSVKHASRPQNTFTETDHPN).

This sequence belongs to the DNA mismatch repair MutL/HexB family.

In terms of biological role, this protein is involved in the repair of mismatches in DNA. It is required for dam-dependent methyl-directed DNA mismatch repair. May act as a 'molecular matchmaker', a protein that promotes the formation of a stable complex between two or more DNA-binding proteins in an ATP-dependent manner without itself being part of a final effector complex. The protein is DNA mismatch repair protein MutL of Streptococcus pyogenes serotype M6 (strain ATCC BAA-946 / MGAS10394).